The chain runs to 34 residues: Mu-theraphotoxin-CCy1a (34 aa).

3 disulfides stabilise this stretch: C3/C18, C10/C23, and C17/C30.

This sequence belongs to the neurotoxin 10 (Hwtx-1) family. 14 (Hntx-1) subfamily. As to expression, expressed by the venom gland.

The protein resides in the secreted. Voltage-gated sodium channel Nav1.7/SCN9A inhibitor. The polypeptide is Mu-theraphotoxin-CCy1a (Chromatopelma cyaneopubescens (Greenbottle blue tarantula)).